Consider the following 311-residue polypeptide: Homeobox-leucine zipper protein HOX1 (311 aa).

Disordered regions lie at residues 29-69 and 97-160; these read AGGA…SDHR and AETT…KKLR. Over residues 119 to 145 the composition is skewed to low complexity; sequence SSPNSTLSSLSGKRGAPSAATAAAAAA. A DNA-binding region (homeobox) is located at residues 154-213; that stretch reads GSRKKLRLSKDQAAVLEDTFKEHNTLNPKQKAALARQLNLKPRQVEVWFQNRRARTKLKQ. The interval 212-256 is leucine-zipper; sequence KQTEVDCELLKRCCETLTDENRRLHRELQELRALKLATAAAAPHH. The interval 279–311 is disordered; it reads SAATTTRNNSGAAPARPVPTRPWPPAAAQRSSA. Residues 280–289 show a composition bias toward polar residues; sequence AATTTRNNSG. The span at 294 to 303 shows a compositional bias: pro residues; sequence RPVPTRPWPP.

This sequence belongs to the HD-ZIP homeobox family. Class II subfamily. Homodimer. May form a heterodimer with HOX2, HOX3 or HOX7. In terms of tissue distribution, expressed in root provascular and vascular cylinder, provascular and vascular strands of leaves, provascular and vascular strands of the whole panicle, in mature embryo provascular bundles of scutellum and embryonic axis and provascular and vascular strands of young immature spikelet organs. Expressed in differentiating and differentiated xylem and phloem elements, and in outer and inner bundle sheath cells of all vascular bundles. Expressed in auricles, ligules, culm, guard cells brac hairs and pollen.

The protein localises to the nucleus. Functionally, probable transcription repressor involved leaf development. Binds to the DNA sequence 5'-CAAT[GC]ATTG-3'. May act as a regulatory switch to specify provascular cell fate. This chain is Homeobox-leucine zipper protein HOX1 (HOX1), found in Oryza sativa subsp. indica (Rice).